The chain runs to 509 residues: tRNA (guanine(37)-N(1))-methyltransferase (509 aa).

The N-terminal 57 residues, 1 to 57 (MVLWILWRPFGFSRRLLKLERHSITESKSLIPLAWTSLTQTLSESPGIFLLGQRKRF), are a transit peptide targeting the mitochondrion. S-adenosyl-L-methionine contacts are provided by residues His289, 327–328 (DL), 355–356 (DG), and Asn387. The segment at 478-509 (TKNPENHEDPPLKRQRTAEAFSDEKTQIASNT) is disordered.

Belongs to the class I-like SAM-binding methyltransferase superfamily. TRM5/TYW2 family. In terms of assembly, monomer.

It localises to the mitochondrion matrix. Its subcellular location is the nucleus. It is found in the cytoplasm. It catalyses the reaction guanosine(37) in tRNA + S-adenosyl-L-methionine = N(1)-methylguanosine(37) in tRNA + S-adenosyl-L-homocysteine + H(+). Involved in mitochondrial tRNA methylation. Specifically methylates the N1 position of guanosine-37 in various tRNAs. Methylation is not dependent on the nature of the nucleoside 5' of the target nucleoside. This is the first step in the biosynthesis of wybutosine (yW), a modified base adjacent to the anticodon of tRNAs and required for accurate decoding. The sequence is that of tRNA (guanine(37)-N(1))-methyltransferase from Macaca fascicularis (Crab-eating macaque).